We begin with the raw amino-acid sequence, 514 residues long: ATP synthase subunit alpha (514 aa).

170–177 (GDRQTGKT) serves as a coordination point for ATP.

This sequence belongs to the ATPase alpha/beta chains family. As to quaternary structure, F-type ATPases have 2 components, CF(1) - the catalytic core - and CF(0) - the membrane proton channel. CF(1) has five subunits: alpha(3), beta(3), gamma(1), delta(1), epsilon(1). CF(0) has three main subunits: a(1), b(2) and c(9-12). The alpha and beta chains form an alternating ring which encloses part of the gamma chain. CF(1) is attached to CF(0) by a central stalk formed by the gamma and epsilon chains, while a peripheral stalk is formed by the delta and b chains.

Its subcellular location is the cell inner membrane. The enzyme catalyses ATP + H2O + 4 H(+)(in) = ADP + phosphate + 5 H(+)(out). Its function is as follows. Produces ATP from ADP in the presence of a proton gradient across the membrane. The alpha chain is a regulatory subunit. The polypeptide is ATP synthase subunit alpha (Acidithiobacillus ferrooxidans (strain ATCC 23270 / DSM 14882 / CIP 104768 / NCIMB 8455) (Ferrobacillus ferrooxidans (strain ATCC 23270))).